The sequence spans 330 residues: tRNA dimethylallyltransferase (330 aa).

Polar residues predominate over residues 1–11 (MDYSHSDSPST). The interval 1 to 21 (MDYSHSDSPSTAPAGKTPVDQ) is disordered. 29–36 (GPTGAGKS) contacts ATP. 31–36 (TGAGKS) contacts substrate. The interval 56–59 (DSMQ) is interaction with substrate tRNA.

Belongs to the IPP transferase family. As to quaternary structure, monomer. Requires Mg(2+) as cofactor.

It catalyses the reaction adenosine(37) in tRNA + dimethylallyl diphosphate = N(6)-dimethylallyladenosine(37) in tRNA + diphosphate. Catalyzes the transfer of a dimethylallyl group onto the adenine at position 37 in tRNAs that read codons beginning with uridine, leading to the formation of N6-(dimethylallyl)adenosine (i(6)A). This is tRNA dimethylallyltransferase from Corynebacterium urealyticum (strain ATCC 43042 / DSM 7109).